Consider the following 237-residue polypeptide: Ribose-5-phosphate isomerase A (237 aa).

Residues 30-33 (SGST), 87-90 (DGAD), and 100-103 (KGGG) each bind substrate. Catalysis depends on Glu-109, which acts as the Proton acceptor. Residue Lys-127 coordinates substrate.

Belongs to the ribose 5-phosphate isomerase family. Homodimer.

It catalyses the reaction aldehydo-D-ribose 5-phosphate = D-ribulose 5-phosphate. It functions in the pathway carbohydrate degradation; pentose phosphate pathway; D-ribose 5-phosphate from D-ribulose 5-phosphate (non-oxidative stage): step 1/1. In terms of biological role, catalyzes the reversible conversion of ribose-5-phosphate to ribulose 5-phosphate. This chain is Ribose-5-phosphate isomerase A, found in Prochlorococcus marinus (strain MIT 9211).